The following is a 101-amino-acid chain: Small ribosomal subunit protein uS14 (101 aa).

Positions 49 to 70 (QSLPRDSSPSRQRNRCNQTGRP) are disordered. Positions 52-68 (PRDSSPSRQRNRCNQTG) are enriched in polar residues.

Belongs to the universal ribosomal protein uS14 family. As to quaternary structure, part of the 30S ribosomal subunit. Contacts proteins S3 and S10.

Binds 16S rRNA, required for the assembly of 30S particles and may also be responsible for determining the conformation of the 16S rRNA at the A site. This Yersinia pseudotuberculosis serotype O:1b (strain IP 31758) protein is Small ribosomal subunit protein uS14.